We begin with the raw amino-acid sequence, 177 residues long: Mitochondrial inner membrane protease subunit 2 (177 aa).

A helical transmembrane segment spans residues 19–37 (FFVAVPVAVTFLDRVACVA). Active-site residues include serine 43 and lysine 91.

It belongs to the peptidase S26 family. IMP2 subfamily. As to quaternary structure, heterodimer of 2 subunits, IMMPL1 and IMMPL2.

The protein localises to the mitochondrion inner membrane. Functionally, catalyzes the removal of transit peptides required for the targeting of proteins from the mitochondrial matrix, across the inner membrane, into the inter-membrane space. Known to process the nuclear encoded protein DIABLO. The polypeptide is Mitochondrial inner membrane protease subunit 2 (IMMP2L) (Bos taurus (Bovine)).